Reading from the N-terminus, the 628-residue chain is Very-long-chain aldehyde decarbonylase GL1-2 (628 aa).

5 helical membrane passes run 37-57 (GAAP…ARGL), 131-151 (GWAI…YWAH), 191-211 (VVIG…VGLV), 299-319 (DFVF…PFVL), and 331-351 (FVLL…WCCS). Positions 137–277 (LLHVLVAEPL…MPIFDLLGGT (141 aa)) constitute a Fatty acid hydroxylase domain.

Belongs to the sterol desaturase family. As to quaternary structure, homodimer. As to expression, expressed in germinating seeds, radicals and leaves.

Its subcellular location is the endoplasmic reticulum membrane. It catalyses the reaction a long-chain fatty aldehyde + 2 NADPH + O2 + H(+) = a long-chain alkane + formate + 2 NADP(+) + H2O. Its function is as follows. Aldehyde decarbonylase involved in the conversion of aldehydes to alkanes. Core component of a very-long-chain alkane synthesis complex. Required for the formation of wax layers conferring cuticular permeability and drought tolerance. In Oryza sativa subsp. japonica (Rice), this protein is Very-long-chain aldehyde decarbonylase GL1-2.